Here is a 306-residue protein sequence, read N- to C-terminus: GTPase Era (306 aa).

In terms of domain architecture, Era-type G spans 14–181 (KSGFIGIIGR…LDELWKYLPE (168 aa)). The G1 stretch occupies residues 22-29 (GRPNVGKS). 22–29 (GRPNVGKS) contributes to the GTP binding site. The segment at 48-52 (QTTRN) is G2. Residues 69-72 (DTPG) form a G3 region. Residues 69 to 73 (DTPGI) and 131 to 134 (NKID) contribute to the GTP site. The tract at residues 131 to 134 (NKID) is G4. The G5 stretch occupies residues 160–162 (ISA). The KH type-2 domain occupies 212 to 290 (THKEIPYSSA…FLELFVRVRK (79 aa)).

The protein belongs to the TRAFAC class TrmE-Era-EngA-EngB-Septin-like GTPase superfamily. Era GTPase family. As to quaternary structure, monomer.

The protein localises to the cytoplasm. The protein resides in the cell inner membrane. An essential GTPase that binds both GDP and GTP, with rapid nucleotide exchange. Plays a role in 16S rRNA processing and 30S ribosomal subunit biogenesis and possibly also in cell cycle regulation and energy metabolism. In Syntrophus aciditrophicus (strain SB), this protein is GTPase Era.